The primary structure comprises 79 residues: Conotoxin PnMSGL-03 (79 aa).

Positions 1–20 are cleaved as a signal peptide; the sequence is MSRLGIMVLTLLLLVFIVTS. The propeptide occupies 21 to 44; that stretch reads HQDAGEKQATQRDAINFRWRRSLI. 3 cysteine pairs are disulfide-bonded: Cys52–Cys64, Cys56–Cys73, and Cys63–Cys77. Leu78 is subject to Leucine amide.

Belongs to the conotoxin O3 superfamily. In terms of tissue distribution, expressed by the venom duct.

It localises to the secreted. The protein is Conotoxin PnMSGL-03 of Conus pennaceus (Feathered cone).